The primary structure comprises 167 residues: MALGLEDKKAIVAEVNEAAKIALSAVVANSRGVTVGKMNALRAQARAEGVNLRLVRNTLARRALEGTDFACLADLFIGPTILAFSNEHPGAAARLLKDFAKANDQFEIKGLAFEGEFIEAAQLDRLATLPTYDEAIAQLMATMKEAAAGKLVRTLAAIRDQKEESAA.

The protein belongs to the universal ribosomal protein uL10 family. In terms of assembly, part of the ribosomal stalk of the 50S ribosomal subunit. The N-terminus interacts with L11 and the large rRNA to form the base of the stalk. The C-terminus forms an elongated spine to which L12 dimers bind in a sequential fashion forming a multimeric L10(L12)X complex.

Forms part of the ribosomal stalk, playing a central role in the interaction of the ribosome with GTP-bound translation factors. The sequence is that of Large ribosomal subunit protein uL10 from Psychromonas ingrahamii (strain DSM 17664 / CCUG 51855 / 37).